The primary structure comprises 964 residues: Integrator complex subunit 4 (964 aa).

N6-acetyllysine is present on K27. HEAT repeat units lie at residues 67 to 106 (AESV…TAGF), 146 to 184 (QATQ…LEKS), 191 to 229 (GSAA…RGLK), 230 to 264 (LHQT…SQLY), 278 to 314 (IRLV…EQVS), 370 to 406 (NLIE…AQSS), 407 to 445 (PSFA…NITL), and 447 to 485 (EDQL…GIHL). K792 is covalently cross-linked (Glycyl lysine isopeptide (Lys-Gly) (interchain with G-Cter in SUMO1); alternate). K792 participates in a covalent cross-link: Glycyl lysine isopeptide (Lys-Gly) (interchain with G-Cter in SUMO2); alternate.

This sequence belongs to the Integrator subunit 4 family. As to quaternary structure, component of the Integrator complex, composed of core subunits INTS1, INTS2, INTS3, INTS4, INTS5, INTS6, INTS7, INTS8, INTS9/RC74, INTS10, INTS11/CPSF3L, INTS12, INTS13, INTS14 and INTS15. The core complex associates with protein phosphatase 2A subunits PPP2CA and PPP2R1A, to form the Integrator-PP2A (INTAC) complex. INTS4 is part of the RNA endonuclease subcomplex, composed of INTS4, INTS9, INTS11 and inositol hexakisphosphate (InsP6). Interacts with BRAT1; interaction is required for the assembly of the RNA endonuclease subcomplex.

It is found in the nucleus. It localises to the cytoplasm. Its function is as follows. Component of the integrator complex, a multiprotein complex that terminates RNA polymerase II (Pol II) transcription in the promoter-proximal region of genes. The integrator complex provides a quality checkpoint during transcription elongation by driving premature transcription termination of transcripts that are unfavorably configured for transcriptional elongation: the complex terminates transcription by (1) catalyzing dephosphorylation of the C-terminal domain (CTD) of Pol II subunit POLR2A/RPB1 and SUPT5H/SPT5, (2) degrading the exiting nascent RNA transcript via endonuclease activity and (3) promoting the release of Pol II from bound DNA. The integrator complex is also involved in terminating the synthesis of non-coding Pol II transcripts, such as enhancer RNAs (eRNAs), small nuclear RNAs (snRNAs), telomerase RNAs and long non-coding RNAs (lncRNAs). Within the integrator complex, INTS4 acts as an scaffold that links INTS9 and INTS11. Mediates recruitment of cytoplasmic dynein to the nuclear envelope, probably as component of the integrator complex. The sequence is that of Integrator complex subunit 4 (Ints4) from Mus musculus (Mouse).